Consider the following 548-residue polypeptide: Chaperonin GroEL (548 aa).

Residues 29 to 32, K50, 86 to 90, G414, 478 to 480, and D494 contribute to the ATP site; these read TMGP, DGTTT, and NAA.

Belongs to the chaperonin (HSP60) family. As to quaternary structure, forms a cylinder of 14 subunits composed of two heptameric rings stacked back-to-back. Interacts with the co-chaperonin GroES.

Its subcellular location is the cytoplasm. It catalyses the reaction ATP + H2O + a folded polypeptide = ADP + phosphate + an unfolded polypeptide.. Together with its co-chaperonin GroES, plays an essential role in assisting protein folding. The GroEL-GroES system forms a nano-cage that allows encapsulation of the non-native substrate proteins and provides a physical environment optimized to promote and accelerate protein folding. Its function is as follows. May play a protective role against the defense mechanisms generated by the infected macrophages. This Legionella pneumophila subsp. pneumophila (strain Philadelphia 1 / ATCC 33152 / DSM 7513) protein is Chaperonin GroEL.